Reading from the N-terminus, the 279-residue chain is 4-deoxy-L-threo-5-hexosulose-uronate ketol-isomerase (279 aa).

The Zn(2+) site is built by histidine 197, histidine 199, glutamate 204, and histidine 246.

Belongs to the KduI family. The cofactor is Zn(2+).

The enzyme catalyses 5-dehydro-4-deoxy-D-glucuronate = 3-deoxy-D-glycero-2,5-hexodiulosonate. It participates in glycan metabolism; pectin degradation; 2-dehydro-3-deoxy-D-gluconate from pectin: step 4/5. In terms of biological role, catalyzes the isomerization of 5-dehydro-4-deoxy-D-glucuronate to 3-deoxy-D-glycero-2,5-hexodiulosonate. This Kineococcus radiotolerans (strain ATCC BAA-149 / DSM 14245 / SRS30216) protein is 4-deoxy-L-threo-5-hexosulose-uronate ketol-isomerase.